The sequence spans 666 residues: tRNA 5-methylaminomethyl-2-thiouridine biosynthesis bifunctional protein MnmC (666 aa).

The interval 1–245 is tRNA (mnm(5)s(2)U34)-methyltransferase; it reads MKQYAIQPAT…KREMLCGVME (245 aa). Residues 270–666 are FAD-dependent cmnm(5)s(2)U34 oxidoreductase; the sequence is IGGGIASALL…RKLLKGKAVK (397 aa).

This sequence in the N-terminal section; belongs to the methyltransferase superfamily. tRNA (mnm(5)s(2)U34)-methyltransferase family. The protein in the C-terminal section; belongs to the DAO family. Requires FAD as cofactor.

The protein resides in the cytoplasm. It carries out the reaction 5-aminomethyl-2-thiouridine(34) in tRNA + S-adenosyl-L-methionine = 5-methylaminomethyl-2-thiouridine(34) in tRNA + S-adenosyl-L-homocysteine + H(+). Functionally, catalyzes the last two steps in the biosynthesis of 5-methylaminomethyl-2-thiouridine (mnm(5)s(2)U) at the wobble position (U34) in tRNA. Catalyzes the FAD-dependent demodification of cmnm(5)s(2)U34 to nm(5)s(2)U34, followed by the transfer of a methyl group from S-adenosyl-L-methionine to nm(5)s(2)U34, to form mnm(5)s(2)U34. This is tRNA 5-methylaminomethyl-2-thiouridine biosynthesis bifunctional protein MnmC from Salmonella typhi.